The primary structure comprises 127 residues: Aspartate 1-decarboxylase (127 aa).

The Schiff-base intermediate with substrate; via pyruvic acid role is filled by serine 25. Pyruvic acid (Ser) is present on serine 25. Substrate is bound at residue threonine 57. The active-site Proton donor is tyrosine 58. Position 73-75 (73-75) interacts with substrate; that stretch reads GAA.

Belongs to the PanD family. In terms of assembly, heterooctamer of four alpha and four beta subunits. Pyruvate serves as cofactor. In terms of processing, is synthesized initially as an inactive proenzyme, which is activated by self-cleavage at a specific serine bond to produce a beta-subunit with a hydroxyl group at its C-terminus and an alpha-subunit with a pyruvoyl group at its N-terminus.

It is found in the cytoplasm. It carries out the reaction L-aspartate + H(+) = beta-alanine + CO2. It participates in cofactor biosynthesis; (R)-pantothenate biosynthesis; beta-alanine from L-aspartate: step 1/1. Catalyzes the pyruvoyl-dependent decarboxylation of aspartate to produce beta-alanine. In Aliarcobacter butzleri (strain RM4018) (Arcobacter butzleri), this protein is Aspartate 1-decarboxylase.